A 239-amino-acid chain; its full sequence is Probable transcriptional regulatory protein Ajs_1898 (239 aa).

The disordered stretch occupies residues 1-21 (MAGHSKWANIQHRKGRQDEKR).

Belongs to the TACO1 family.

The protein resides in the cytoplasm. The sequence is that of Probable transcriptional regulatory protein Ajs_1898 from Acidovorax sp. (strain JS42).